The primary structure comprises 307 residues: Putative lipid kinase SERP0390 (307 aa).

Residues 3–139 (QPYNHGVLFY…YDVLKVNDLY (137 aa)) form the DAGKc domain. ATP contacts are provided by residues Ser44, 74 to 80 (GDGTLNE), and Thr101. Mg(2+) is bound by residues Ser220, Asp223, and Arg225. Glu281 (proton acceptor) is an active-site residue.

It belongs to the diacylglycerol/lipid kinase family. Mg(2+) is required as a cofactor.

May catalyze the ATP-dependent phosphorylation of lipids other than diacylglycerol (DAG). The sequence is that of Putative lipid kinase SERP0390 from Staphylococcus epidermidis (strain ATCC 35984 / DSM 28319 / BCRC 17069 / CCUG 31568 / BM 3577 / RP62A).